Reading from the N-terminus, the 246-residue chain is Bis(5'-nucleosyl)-tetraphosphatase PrpE [asymmetrical] (246 aa).

It belongs to the PrpE family. Ni(2+) serves as cofactor.

It carries out the reaction P(1),P(4)-bis(5'-guanosyl) tetraphosphate + H2O = GMP + GTP + 2 H(+). In terms of biological role, asymmetrically hydrolyzes Ap4p to yield AMP and ATP. The protein is Bis(5'-nucleosyl)-tetraphosphatase PrpE [asymmetrical] of Bacillus mycoides (strain KBAB4) (Bacillus weihenstephanensis).